Reading from the N-terminus, the 205-residue chain is MALYVSMVWRKILRKRWVLGVVFGLSLIYFLTSTFKQEERTVRDRMLLQTGDQDQNLQWKVQFNLGNSSRISNQCRNSVQGKLLVTDDMGYICERKELLANGCCNINVASTKLYSCETCLPNGCCSVYEFCVSCCLQPNKQLQLERFLNKAAVAFQNLFQAVEDHFELCLAKCRTSSQSVQHENTYRNPIAKHCYGESPPELLPI.

The Cytoplasmic portion of the chain corresponds to 1-16 (MALYVSMVWRKILRKR). A helical transmembrane segment spans residues 17 to 35 (WVLGVVFGLSLIYFLTSTF). The Lumenal segment spans residues 36-205 (KQEERTVRDR…GESPPELLPI (170 aa)). An N-linked (GlcNAc...) asparagine glycan is attached at N67.

Belongs to the SPRING family.

Its subcellular location is the golgi apparatus membrane. Functionally, positively regulates hepatic SREBP signaling pathway by modulating the proper localization of SCAP (SREBP cleavage-activating protein) to the endoplasmic reticulum, thereby controlling the level of functional SCAP. The chain is SREBP regulating gene protein from Xenopus laevis (African clawed frog).